The sequence spans 198 residues: Recombination protein RecR (198 aa).

The C4-type zinc-finger motif lies at 57 to 72; the sequence is CSVCGHITDTDPCYIC. The region spanning 80–175 is the Toprim domain; that stretch reads SMICVVEETK…KVTRLAHGLP (96 aa).

This sequence belongs to the RecR family.

Functionally, may play a role in DNA repair. It seems to be involved in an RecBC-independent recombinational process of DNA repair. It may act with RecF and RecO. The chain is Recombination protein RecR from Macrococcus caseolyticus (strain JCSC5402) (Macrococcoides caseolyticum).